Reading from the N-terminus, the 397-residue chain is Adenylosuccinate synthetase (397 aa).

GTP is bound by residues 11 to 17 (GDEGKGK) and 39 to 41 (GHT). D12 (proton acceptor) is an active-site residue. 2 residues coordinate Mg(2+): D12 and G39. IMP is bound by residues 12–15 (DEGK), 37–40 (NAGH), T125, R139, Q212, T227, and R290. H40 functions as the Proton donor in the catalytic mechanism. 286–292 (STTGRPR) contributes to the substrate binding site. GTP is bound by residues R292, 318 to 320 (KAD), and 386 to 388 (STG).

It belongs to the adenylosuccinate synthetase family. Homodimer. Requires Mg(2+) as cofactor.

The protein resides in the cytoplasm. The enzyme catalyses IMP + L-aspartate + GTP = N(6)-(1,2-dicarboxyethyl)-AMP + GDP + phosphate + 2 H(+). It participates in purine metabolism; AMP biosynthesis via de novo pathway; AMP from IMP: step 1/2. Its function is as follows. Plays an important role in the de novo pathway of purine nucleotide biosynthesis. Catalyzes the first committed step in the biosynthesis of AMP from IMP. The protein is Adenylosuccinate synthetase of Thermotoga maritima (strain ATCC 43589 / DSM 3109 / JCM 10099 / NBRC 100826 / MSB8).